Reading from the N-terminus, the 577-residue chain is MAGLTVRDPAVDRSLRSVFVGNIPYEATEEQLKDIFSEVGPVVSFRLVYDRETGKPKGYGFCEYQDQETALSAMRNLNGREFSGRALRVDNAASEKNKEELKSLGTGAPVIESPYGETISPEDAPESISKAVASLPPEQMFELMKQMKLCVQNSPQEARNMLLQNPQLAYALLQAQVVMRIVDPEIALKILHRQTNIPTLIAGNPQPVHGAGPGSGSNVSMNQQNPQAPQAQSLGGMHVNGAPPLMQASMQGGVPAPGQMPAAVTGPGPGSLAPGGGMQAQVGMPGSGPVSMERGQVPMQDPRAAMQRGSLPANVPTPRGLLGDAPNDPRGGTLLSVTGEVEPRGYLGPPHQGPPMHHVPGHESRGPPPHELRGGPLPEPRPLMAEPRGPMLDQRGPPLDGRGGRDPRGIDARGMEARAMEARGLDARGLEARAMEARAMEARAMEARAMEARAMEVRGMEARGMDTRGPVPGPRGPIPSGMQGPSPINMGAVVPQGSRQVPVMQGTGMQGASIQGGSQPGGFSPGQNQVTPQDHEKAALIMQVLQLTADQIAMLPPEQRQSILILKEQIQKSTGAP.

Position 14 is a phosphoserine (Ser14). Residues 16-94 (RSVFVGNIPY…RALRVDNAAS (79 aa)) form the RRM domain. Residues 108 to 248 (APVIESPYGE…VNGAPPLMQA (141 aa)) form an interactions with CSTF3 and SYMPK region. Lys189 participates in a covalent cross-link: Glycyl lysine isopeptide (Lys-Gly) (interchain with G-Cter in SUMO2). The tract at residues 206–243 (QPVHGAGPGSGSNVSMNQQNPQAPQAQSLGGMHVNGAP) is disordered. Residues 222-232 (NQQNPQAPQAQ) show a composition bias toward low complexity. The residue at position 308 (Arg308) is an Omega-N-methylarginine. Residues 340–409 (EVEPRGYLGP…DGRGGRDPRG (70 aa)) are disordered. Residues 360–373 (PGHESRGPPPHELR) show a composition bias toward basic and acidic residues. Residues 410 to 414 (IDARG) form a 1; approximate repeat. The tract at residues 410 to 469 (IDARGMEARAMEARGLDARGLEARAMEARAMEARAMEARAMEARAMEVRGMEARGMDTRG) is 12 X 5 AA tandem repeats of M-E-A-R-[AG]. 2 tandem repeats follow at residues 415–419 (MEARA) and 420–424 (MEARG). Residues 425–429 (LDARG) form a 4; approximate repeat. Residues 430-434 (LEARA) form a 5; approximate repeat. 4 repeat units span residues 435–439 (MEARA), 440–444 (MEARA), 445–449 (MEARA), and 450–454 (MEARA). A 10; approximate repeat occupies 455-459 (MEVRG). Repeat 11 spans residues 460-464 (MEARG). The stretch at 465 to 469 (MDTRG) is one 12; approximate repeat. Omega-N-methylarginine occurs at positions 468 and 475. Residues 508-532 (GMQGASIQGGSQPGGFSPGQNQVTP) are disordered. The tract at residues 514 to 577 (IQGGSQPGGF…EQIQKSTGAP (64 aa)) is interaction with RPO2TC1. Phosphoserine occurs at positions 518 and 524.

In terms of assembly, the CSTF complex is composed of CSTF1 (50 kDa subunit), CSTF2 (64 kDa subunit) and CSTF3 (77 kDa subunit). CSTF2 directly interacts with CSTF3, SYMPK and RPO2TC1. Interacts with HSF1 in heat-stressed cells. Interacts with CPSF2, CPSF3 and FIP1L1. Interacts with DDX1.

The protein localises to the nucleus. Functionally, one of the multiple factors required for polyadenylation and 3'-end cleavage of mammalian pre-mRNAs. This subunit is directly involved in the binding to pre-mRNAs. The chain is Cleavage stimulation factor subunit 2 (CSTF2) from Homo sapiens (Human).